The sequence spans 390 residues: Succinate--CoA ligase [ADP-forming] subunit beta (390 aa).

Positions 9–248 constitute an ATP-grasp domain; that stretch reads KDILRKFGVS…ISEEDPFEVE (240 aa). ATP is bound by residues lysine 50, 57–59, glutamate 103, methionine 106, and glutamate 111; that span reads GRG. Mg(2+) contacts are provided by asparagine 203 and aspartate 217. Substrate-binding positions include asparagine 268 and 325–327; that span reads GIV.

Belongs to the succinate/malate CoA ligase beta subunit family. In terms of assembly, heterotetramer of two alpha and two beta subunits. It depends on Mg(2+) as a cofactor.

The enzyme catalyses succinate + ATP + CoA = succinyl-CoA + ADP + phosphate. It carries out the reaction GTP + succinate + CoA = succinyl-CoA + GDP + phosphate. The protein operates within carbohydrate metabolism; tricarboxylic acid cycle; succinate from succinyl-CoA (ligase route): step 1/1. Succinyl-CoA synthetase functions in the citric acid cycle (TCA), coupling the hydrolysis of succinyl-CoA to the synthesis of either ATP or GTP and thus represents the only step of substrate-level phosphorylation in the TCA. The beta subunit provides nucleotide specificity of the enzyme and binds the substrate succinate, while the binding sites for coenzyme A and phosphate are found in the alpha subunit. In Prosthecochloris aestuarii (strain DSM 271 / SK 413), this protein is Succinate--CoA ligase [ADP-forming] subunit beta.